A 904-amino-acid polypeptide reads, in one-letter code: Envelope glycoprotein (904 aa).

Topologically, residues 1-726 (MDQDLDGAER…LFDWTSWKDW (726 aa)) are extracellular. Residues Asn-131, Asn-255, Asn-277, Asn-296, Asn-329, Asn-367, Asn-376, Asn-385, Asn-410, Asn-427, Asn-432, Asn-452, Asn-491, Asn-509, and Asn-541 are each glycosylated (N-linked (GlcNAc...) asparagine; by host). A fusion peptide region spans residues 556-576 (AVGLAIFLLVLAIMAITSSLV). Residues 588 to 638 (AKVVERVVQNVSYIAQTQDQFTHLFRNINNRLNVLHHRVSYLEYVEEIRQK) adopt a coiled-coil conformation. The N-linked (GlcNAc...) asparagine; by host glycan is linked to Asn-597. The interval 615–631 (INNRLNVLHHRVSYLEY) is immunosuppression. Residues Asn-663 and Asn-694 are each glycosylated (N-linked (GlcNAc...) asparagine; by host). Residues 676 to 712 (DEYDKIEEKILKIRVDWLNSSLSDTQDTFGLETSIFD) adopt a coiled-coil conformation. A helical transmembrane segment spans residues 727-747 (IKIIIVIIVLWLLIKILLGML). The Cytoplasmic portion of the chain corresponds to 748–904 (RSCAKVSQNY…AWYEGLRGSQ (157 aa)). Disordered regions lie at residues 761–783 (PAEEEDGDTEPESSPARGDPASG) and 862–904 (GGTS…RGSQ). Polar residues predominate over residues 878-887 (WTGSREQNNP).

The mature envelope protein (Env) consists of a trimer of SU-TM heterodimers attached by non-covalent interactions or by a labile interchain disulfide bond. Specific enzymatic cleavages in vivo yield mature proteins. Envelope glycoproteins are synthesized as an inactive precursor that is N-glycosylated and processed likely by host cell furin or by a furin-like protease in the Golgi to yield the mature SU and TM proteins. The cleavage site between SU and TM requires the minimal sequence [KR]-X-[KR]-R.

It localises to the virion membrane. It is found in the host cell membrane. In terms of biological role, the surface protein (SU) attaches the virus to the host cell by binding to its receptor. This interaction triggers the refolding of the transmembrane protein (TM) and is thought to activate its fusogenic potential by unmasking its fusion peptide. Fusion occurs at the host cell plasma membrane. The transmembrane protein (TM) acts as a class I viral fusion protein. Under the current model, the protein has at least 3 conformational states: pre-fusion native state, pre-hairpin intermediate state, and post-fusion hairpin state. During viral and target cell membrane fusion, the coiled coil regions (heptad repeats) assume a trimer-of-hairpins structure, positioning the fusion peptide in close proximity to the C-terminal region of the ectodomain. The formation of this structure appears to drive apposition and subsequent fusion of viral and target cell membranes. Membranes fusion leads to delivery of the nucleocapsid into the cytoplasm. The chain is Envelope glycoprotein (env) from Bovine immunodeficiency virus (strain R29) (BIV).